A 120-amino-acid chain; its full sequence is Large ribosomal subunit protein bL20 (120 aa).

This sequence belongs to the bacterial ribosomal protein bL20 family.

Its function is as follows. Binds directly to 23S ribosomal RNA and is necessary for the in vitro assembly process of the 50S ribosomal subunit. It is not involved in the protein synthesizing functions of that subunit. This is Large ribosomal subunit protein bL20 from Novosphingobium aromaticivorans (strain ATCC 700278 / DSM 12444 / CCUG 56034 / CIP 105152 / NBRC 16084 / F199).